The following is a 417-amino-acid chain: Serine hydroxymethyltransferase (417 aa).

Residues Leu-120 and 124–126 each bind (6S)-5,6,7,8-tetrahydrofolate; that span reads GHL. Lys-229 carries the N6-(pyridoxal phosphate)lysine modification.

The protein belongs to the SHMT family. Homodimer. Pyridoxal 5'-phosphate is required as a cofactor.

It localises to the cytoplasm. The catalysed reaction is (6R)-5,10-methylene-5,6,7,8-tetrahydrofolate + glycine + H2O = (6S)-5,6,7,8-tetrahydrofolate + L-serine. It participates in one-carbon metabolism; tetrahydrofolate interconversion. The protein operates within amino-acid biosynthesis; glycine biosynthesis; glycine from L-serine: step 1/1. Its function is as follows. Catalyzes the reversible interconversion of serine and glycine with tetrahydrofolate (THF) serving as the one-carbon carrier. This reaction serves as the major source of one-carbon groups required for the biosynthesis of purines, thymidylate, methionine, and other important biomolecules. Also exhibits THF-independent aldolase activity toward beta-hydroxyamino acids, producing glycine and aldehydes, via a retro-aldol mechanism. The protein is Serine hydroxymethyltransferase of Anaeromyxobacter dehalogenans (strain 2CP-1 / ATCC BAA-258).